The following is a 365-amino-acid chain: Peptide chain release factor 2 (365 aa).

N5-methylglutamine is present on Gln252.

It belongs to the prokaryotic/mitochondrial release factor family. In terms of processing, methylated by PrmC. Methylation increases the termination efficiency of RF2.

The protein resides in the cytoplasm. Its function is as follows. Peptide chain release factor 2 directs the termination of translation in response to the peptide chain termination codons UGA and UAA. This Yersinia enterocolitica serotype O:8 / biotype 1B (strain NCTC 13174 / 8081) protein is Peptide chain release factor 2.